Consider the following 259-residue polypeptide: Acyl-[acyl-carrier-protein]--UDP-N-acetylglucosamine O-acyltransferase (259 aa).

It belongs to the transferase hexapeptide repeat family. LpxA subfamily. Homotrimer.

The protein localises to the cytoplasm. It catalyses the reaction a (3R)-hydroxyacyl-[ACP] + UDP-N-acetyl-alpha-D-glucosamine = a UDP-3-O-[(3R)-3-hydroxyacyl]-N-acetyl-alpha-D-glucosamine + holo-[ACP]. It participates in glycolipid biosynthesis; lipid IV(A) biosynthesis; lipid IV(A) from (3R)-3-hydroxytetradecanoyl-[acyl-carrier-protein] and UDP-N-acetyl-alpha-D-glucosamine: step 1/6. Functionally, involved in the biosynthesis of lipid A, a phosphorylated glycolipid that anchors the lipopolysaccharide to the outer membrane of the cell. This Psychrobacter sp. (strain PRwf-1) protein is Acyl-[acyl-carrier-protein]--UDP-N-acetylglucosamine O-acyltransferase.